A 283-amino-acid chain; its full sequence is MLIIETLPLLRQQIRRLRMEGKRVALVPTMGNLHDGHMKLVDEAKARADVVVVSIFVNPMQFDRPEDLARYPRTLQEDCEKLNKRKVDLVFAPSVKEIYPNGTETHTYVDVPGLSTMLEGASRPGHFRGVSTIVSKLFNLVQPDIACFGEKDFQQLALIRKMVADMGFDIEIVGVPIMRAKDGLALSSRNGYLTAEQRKIAPGLYKVLSSIADKLQAGERDLDEIIAIAGQELNEKGFRSDDIQIRDADTLLEISENSKRAVILVAAWLGDARLIDNKMVELA.

30 to 37 serves as a coordination point for ATP; that stretch reads MGNLHDGH. Catalysis depends on His37, which acts as the Proton donor. Gln61 provides a ligand contact to (R)-pantoate. Gln61 contacts beta-alanine. An ATP-binding site is contributed by 149–152; it reads GEKD. Gln155 contributes to the (R)-pantoate binding site. 186-189 lines the ATP pocket; sequence LSSR.

It belongs to the pantothenate synthetase family. In terms of assembly, homodimer.

The protein localises to the cytoplasm. It catalyses the reaction (R)-pantoate + beta-alanine + ATP = (R)-pantothenate + AMP + diphosphate + H(+). Its pathway is cofactor biosynthesis; (R)-pantothenate biosynthesis; (R)-pantothenate from (R)-pantoate and beta-alanine: step 1/1. In terms of biological role, catalyzes the condensation of pantoate with beta-alanine in an ATP-dependent reaction via a pantoyl-adenylate intermediate. The chain is Pantothenate synthetase from Escherichia fergusonii (strain ATCC 35469 / DSM 13698 / CCUG 18766 / IAM 14443 / JCM 21226 / LMG 7866 / NBRC 102419 / NCTC 12128 / CDC 0568-73).